A 702-amino-acid chain; its full sequence is Ribosomal RNA large subunit methyltransferase K/L (702 aa).

Residues 43 to 154 (LVYQSLMWSR…KETASIALDL (112 aa)) enclose the THUMP domain.

Belongs to the methyltransferase superfamily. RlmKL family.

The protein resides in the cytoplasm. It catalyses the reaction guanosine(2445) in 23S rRNA + S-adenosyl-L-methionine = N(2)-methylguanosine(2445) in 23S rRNA + S-adenosyl-L-homocysteine + H(+). The catalysed reaction is guanosine(2069) in 23S rRNA + S-adenosyl-L-methionine = N(2)-methylguanosine(2069) in 23S rRNA + S-adenosyl-L-homocysteine + H(+). Functionally, specifically methylates the guanine in position 2445 (m2G2445) and the guanine in position 2069 (m7G2069) of 23S rRNA. The sequence is that of Ribosomal RNA large subunit methyltransferase K/L from Escherichia coli O157:H7.